The following is a 609-amino-acid chain: Glutamine--fructose-6-phosphate aminotransferase [isomerizing] (609 aa).

Cys2 serves as the catalytic Nucleophile; for GATase activity. The Glutamine amidotransferase type-2 domain occupies 2–218; the sequence is CGIVGAIAQR…EGDIAEITRR (217 aa). 2 SIS domains span residues 286–426 and 458–599; these read ADEL…LKGL and LAED…VDQP. The For Fru-6P isomerization activity role is filled by Lys604.

As to quaternary structure, homodimer.

It is found in the cytoplasm. The catalysed reaction is D-fructose 6-phosphate + L-glutamine = D-glucosamine 6-phosphate + L-glutamate. Catalyzes the first step in hexosamine metabolism, converting fructose-6P into glucosamine-6P using glutamine as a nitrogen source. In Escherichia coli O157:H7, this protein is Glutamine--fructose-6-phosphate aminotransferase [isomerizing].